Consider the following 391-residue polypeptide: GDSL esterase/lipase 22 (391 aa).

The first 29 residues, 1–29, serve as a signal peptide directing secretion; that stretch reads MMANNCNLVSVLCVILVLTLFHNPITVAG. Serine 43 functions as the Nucleophile in the catalytic mechanism. N-linked (GlcNAc...) asparagine glycans are attached at residues asparagine 105, asparagine 165, and asparagine 288. Residues aspartate 322 and histidine 325 contribute to the active site. The tract at residues 372–391 is disordered; it reads PATVHASDSSSSTSRGYEYY.

Belongs to the 'GDSL' lipolytic enzyme family. Component of the PYK10 complex, at least composed of PYK10/BGLU23, BGLU21, BGLU22, JAL22, JAL23, PBP1/JAL30, PBP2/JAL31, JAL32, JAL33, JAL34, JAL35, GLL22 and GLL23.

It localises to the secreted. This chain is GDSL esterase/lipase 22 (GLL22), found in Arabidopsis thaliana (Mouse-ear cress).